The primary structure comprises 96 residues: Co-chaperonin GroES (96 aa).

Belongs to the GroES chaperonin family. Heptamer of 7 subunits arranged in a ring. Interacts with the chaperonin GroEL.

The protein resides in the cytoplasm. Functionally, together with the chaperonin GroEL, plays an essential role in assisting protein folding. The GroEL-GroES system forms a nano-cage that allows encapsulation of the non-native substrate proteins and provides a physical environment optimized to promote and accelerate protein folding. GroES binds to the apical surface of the GroEL ring, thereby capping the opening of the GroEL channel. The polypeptide is Co-chaperonin GroES (Vibrio atlanticus (strain LGP32) (Vibrio splendidus (strain Mel32))).